A 273-amino-acid polypeptide reads, in one-letter code: Glutamate 5-kinase (273 aa).

Lysine 15 provides a ligand contact to ATP. Serine 55, aspartate 142, and asparagine 158 together coordinate substrate. Residues 178–179 (SD) and 220–226 (TGGMLSK) each bind ATP.

The protein belongs to the glutamate 5-kinase family.

The protein resides in the cytoplasm. It carries out the reaction L-glutamate + ATP = L-glutamyl 5-phosphate + ADP. It functions in the pathway amino-acid biosynthesis; L-proline biosynthesis; L-glutamate 5-semialdehyde from L-glutamate: step 1/2. Catalyzes the transfer of a phosphate group to glutamate to form L-glutamate 5-phosphate. This Streptococcus pyogenes serotype M1 protein is Glutamate 5-kinase.